We begin with the raw amino-acid sequence, 168 residues long: Large ribosomal subunit protein uL10 (168 aa).

It belongs to the universal ribosomal protein uL10 family. As to quaternary structure, part of the ribosomal stalk of the 50S ribosomal subunit. The N-terminus interacts with L11 and the large rRNA to form the base of the stalk. The C-terminus forms an elongated spine to which L12 dimers bind in a sequential fashion forming a multimeric L10(L12)X complex.

Forms part of the ribosomal stalk, playing a central role in the interaction of the ribosome with GTP-bound translation factors. This is Large ribosomal subunit protein uL10 from Paracidovorax citrulli (strain AAC00-1) (Acidovorax citrulli).